The primary structure comprises 392 residues: O-phospho-L-seryl-tRNA:Cys-tRNA synthase (392 aa).

Pyridoxal 5'-phosphate contacts are provided by residues alanine 84 to arginine 85, asparagine 191, and serine 214 to histidine 216. At lysine 217 the chain carries N6-(pyridoxal phosphate)lysine.

It belongs to the SepCysS family. In terms of assembly, homodimer. Interacts with SepRS. It depends on pyridoxal 5'-phosphate as a cofactor.

It carries out the reaction O-phospho-L-seryl-tRNA(Cys) + hydrogen sulfide + H(+) = L-cysteinyl-tRNA(Cys) + phosphate. Converts O-phospho-L-seryl-tRNA(Cys) (Sep-tRNA(Cys)) to L-cysteinyl-tRNA(Cys) (Cys-tRNA(Cys)). This is O-phospho-L-seryl-tRNA:Cys-tRNA synthase from Methanopyrus kandleri (strain AV19 / DSM 6324 / JCM 9639 / NBRC 100938).